A 299-amino-acid chain; its full sequence is Muscleblind-like protein (299 aa).

2 C3H1-type zinc fingers span residues 38-66 (WLQVEVCREFLRGQCARSDQECKFAHPPP) and 72-100 (QGRVTACYDSIKGRCTRENPKCKYLHPPQ).

This sequence belongs to the muscleblind family.

Its subcellular location is the nucleus. Functionally, binds to RNA with repeat sequences CUG and CCUG. This Caenorhabditis briggsae protein is Muscleblind-like protein.